Reading from the N-terminus, the 151-residue chain is uncharacterized protein (151 aa).

This is an uncharacterized protein from Mycoplasma genitalium (strain ATCC 33530 / DSM 19775 / NCTC 10195 / G37) (Mycoplasmoides genitalium).